We begin with the raw amino-acid sequence, 193 residues long: dITP/XTP pyrophosphatase (193 aa).

7–12 provides a ligand contact to substrate; it reads SENENK. Asp-65 (proton acceptor) is an active-site residue. Asp-65 provides a ligand contact to Mg(2+). Residues Ser-66, 144–147, Lys-167, and 172–173 contribute to the substrate site; these read FGYD and HR.

Belongs to the HAM1 NTPase family. As to quaternary structure, homodimer. The cofactor is Mg(2+).

The enzyme catalyses XTP + H2O = XMP + diphosphate + H(+). It carries out the reaction dITP + H2O = dIMP + diphosphate + H(+). It catalyses the reaction ITP + H2O = IMP + diphosphate + H(+). Its function is as follows. Pyrophosphatase that catalyzes the hydrolysis of nucleoside triphosphates to their monophosphate derivatives, with a high preference for the non-canonical purine nucleotides XTP (xanthosine triphosphate), dITP (deoxyinosine triphosphate) and ITP. Seems to function as a house-cleaning enzyme that removes non-canonical purine nucleotides from the nucleotide pool, thus preventing their incorporation into DNA/RNA and avoiding chromosomal lesions. The sequence is that of dITP/XTP pyrophosphatase from Tropheryma whipplei (strain TW08/27) (Whipple's bacillus).